A 333-amino-acid polypeptide reads, in one-letter code: MNDILNKEPMEEDYGIEKSLRPQFFNQYIGQDKVKEQLEIFIKAAKMREEVLDHVLLFGPPGLGKTTMAFVIANELGVNIKQTAGPAIEKPGDLVAILNELEPGDVLFIDEIHRMPMQVEEVLYSAMEDFYIDIMLGSGDGSRSVHLDLPPFTLVGATTRAGMLSNPLRARFGISSHMEYYQERDLEEIVKRTADIFEVEVIDNAAIEIALRSRGTPRIANRLLKRVRDFAQIMGDGRVDKAITDKALTILDVDAAGLDYIDQKILRTMIEMYHGGPVGIGTLAVNIAEDRETVEDMYEPYLIQKGFLMRTKQGRKVTQRAYEHLGYVYNEEE.

Residues 1-181 (MNDILNKEPM…FGISSHMEYY (181 aa)) form a large ATPase domain (RuvB-L) region. Residues Leu20, Arg21, Gly62, Lys65, Thr66, Thr67, 128 to 130 (EDF), Arg171, Tyr181, and Arg218 contribute to the ATP site. Thr66 is a binding site for Mg(2+). The segment at 182–252 (QERDLEEIVK…ITDKALTILD (71 aa)) is small ATPAse domain (RuvB-S). Residues 255–333 (AAGLDYIDQK…HLGYVYNEEE (79 aa)) form a head domain (RuvB-H) region. The DNA site is built by Arg291, Arg310, and Arg315.

This sequence belongs to the RuvB family. In terms of assembly, homohexamer. Forms an RuvA(8)-RuvB(12)-Holliday junction (HJ) complex. HJ DNA is sandwiched between 2 RuvA tetramers; dsDNA enters through RuvA and exits via RuvB. An RuvB hexamer assembles on each DNA strand where it exits the tetramer. Each RuvB hexamer is contacted by two RuvA subunits (via domain III) on 2 adjacent RuvB subunits; this complex drives branch migration. In the full resolvosome a probable DNA-RuvA(4)-RuvB(12)-RuvC(2) complex forms which resolves the HJ.

Its subcellular location is the cytoplasm. The catalysed reaction is ATP + H2O = ADP + phosphate + H(+). Its function is as follows. The RuvA-RuvB-RuvC complex processes Holliday junction (HJ) DNA during genetic recombination and DNA repair, while the RuvA-RuvB complex plays an important role in the rescue of blocked DNA replication forks via replication fork reversal (RFR). RuvA specifically binds to HJ cruciform DNA, conferring on it an open structure. The RuvB hexamer acts as an ATP-dependent pump, pulling dsDNA into and through the RuvAB complex. RuvB forms 2 homohexamers on either side of HJ DNA bound by 1 or 2 RuvA tetramers; 4 subunits per hexamer contact DNA at a time. Coordinated motions by a converter formed by DNA-disengaged RuvB subunits stimulates ATP hydrolysis and nucleotide exchange. Immobilization of the converter enables RuvB to convert the ATP-contained energy into a lever motion, pulling 2 nucleotides of DNA out of the RuvA tetramer per ATP hydrolyzed, thus driving DNA branch migration. The RuvB motors rotate together with the DNA substrate, which together with the progressing nucleotide cycle form the mechanistic basis for DNA recombination by continuous HJ branch migration. Branch migration allows RuvC to scan DNA until it finds its consensus sequence, where it cleaves and resolves cruciform DNA. This Lactococcus lactis subsp. cremoris (strain SK11) protein is Holliday junction branch migration complex subunit RuvB.